A 124-amino-acid chain; its full sequence is Small ribosomal subunit protein uS11 (124 aa).

This sequence belongs to the universal ribosomal protein uS11 family. As to quaternary structure, part of the 30S ribosomal subunit. Interacts with proteins S7 and S18. Binds to IF-3.

In terms of biological role, located on the platform of the 30S subunit, it bridges several disparate RNA helices of the 16S rRNA. Forms part of the Shine-Dalgarno cleft in the 70S ribosome. The polypeptide is Small ribosomal subunit protein uS11 (Anaplasma phagocytophilum (strain HZ)).